Reading from the N-terminus, the 142-residue chain is Secreted RxLR effector protein 161 (142 aa).

An N-terminal signal peptide occupies residues 1-27; it reads MKNVPYLSAVGAIMYLMVVTRPDLAAA. A RxLR motif is present at residues 48 to 51; that stretch reads RVLR.

Belongs to the RxLR effector family.

The protein localises to the secreted. It localises to the host chloroplast envelope. The protein resides in the host nucleus. Secreted effector that completely suppresses the host cell death induced by cell death-inducing proteins. The protein is Secreted RxLR effector protein 161 of Plasmopara viticola (Downy mildew of grapevine).